Reading from the N-terminus, the 188-residue chain is Elongation factor P (188 aa).

The residue at position 34 (Lys-34) is an N6-(3,6-diaminohexanoyl)-5-hydroxylysine.

This sequence belongs to the elongation factor P family. Post-translationally, is beta-lysylated on the epsilon-amino group of Lys-34 by the combined action of EpmA and EpmB, and then hydroxylated on the C5 position of the same residue by EpmC. Lysylation is critical for the stimulatory effect of EF-P on peptide-bond formation. The lysylation moiety would extend toward the peptidyltransferase center and stabilize the terminal 3-CCA end of the tRNA. The hydroxylation of the C5 position on Lys-34 would allow additional potential stabilizing hydrogen-bond interactions with the P-tRNA.

It localises to the cytoplasm. It functions in the pathway protein biosynthesis; polypeptide chain elongation. Its function is as follows. Involved in peptide bond synthesis. Alleviates ribosome stalling that occurs when 3 or more consecutive Pro residues or the sequence PPG is present in a protein, possibly by augmenting the peptidyl transferase activity of the ribosome. Modification of Lys-34 is required for alleviation. The polypeptide is Elongation factor P (Salmonella arizonae (strain ATCC BAA-731 / CDC346-86 / RSK2980)).